We begin with the raw amino-acid sequence, 374 residues long: Speckle-type POZ protein (374 aa).

One can recognise an MATH domain in the interval 31 to 161 (KFSYMWTINN…DDKLTLFCEV (131 aa)). The segment at 71–191 (VNPKGLDEES…PECRLADELG (121 aa)) is required for nuclear localization. Residues 123–133 (YRFVQGKDWGF) are important for binding substrate proteins. The region spanning 173-297 (QNTMNMVKVP…MCEDALCSNL (125 aa)) is the BTB domain. Important for homodimerization stretches follow at residues 186 to 217 (LADELGGLWENSRFTDCCLCVAGQEFQAHKAI) and 297 to 355 (LSVE…AYRS).

It belongs to the Tdpoz family. Interacts with GLI2 and GLI3. Homodimer and homooligomer. Heterodimer with SPOPL. Each dimer interacts with two CUL3 molecules. Part of cullin-RING-based BCR (BTB-CUL3-RBX1) E3 ubiquitin-protein ligase complexes that contain CUL3 and homodimeric SPOP, or the heterodimer formed by SPOP and SPOPL, plus a target protein, such as MACROH2A1, PDX1/IPF1, BMI1, BRMS1 and DAXX. Interacts with IRF1; this interaction mediates IRF1 proteasomal degradation. Interacts with HNF1A.

It is found in the nucleus. Its subcellular location is the nucleus speckle. It participates in protein modification; protein ubiquitination. In terms of biological role, component of a cullin-RING-based BCR (BTB-CUL3-RBX1) E3 ubiquitin-protein ligase complex that mediates the ubiquitination of target proteins, leading most often to their proteasomal degradation. In complex with CUL3, involved in ubiquitination and proteasomal degradation of BRMS1, DAXX, PDX1/IPF1, GLI2 and GLI3. In complex with CUL3, involved in ubiquitination of MACROH2A1 and BMI1; this does not lead to their proteasomal degradation. Inhibits transcriptional activation of PDX1/IPF1 targets, such as insulin, by promoting PDX1/IPF1 degradation. The cullin-RING-based BCR (BTB-CUL3-RBX1) E3 ubiquitin-protein ligase complex containing homodimeric SPOP has higher ubiquitin ligase activity than the complex that contains the heterodimer formed by SPOP and SPOPL. Involved in the regulation of bromodomain and extra-terminal motif (BET) proteins BRD2, BRD3, BRD4 stability.Plays an essential role for proper translation, but not for their degradation, of critical DNA replication licensing factors CDT1 and CDC6, thereby participating in DNA synthesis and cell proliferation. Regulates interferon regulatory factor 1/IRF1 proteasomal turnover by targeting S/T-rich degrons in IRF1. Involved in ubiquitination of BRDT and promotes its degradation, thereby regulates histone removal in early condensing spermatids prior to histone-to-protamine exchange. The polypeptide is Speckle-type POZ protein (SPOP) (Bos taurus (Bovine)).